Reading from the N-terminus, the 256-residue chain is Hypodermin-A (256 aa).

The signal sequence occupies residues 1–22; sequence MLKFVILLCSIAYVFGAVVPLG. Residues 23–30 constitute a propeptide, activation peptide; sequence MLSQSDGR. The Peptidase S1 domain maps to 31-254; sequence IVGGVESKIE…VRSLIVSNAE (224 aa). A disulfide bond links C56 and C72. Residues H71 and D116 each act as charge relay system in the active site. 2 cysteine pairs are disulfide-bonded: C180-C197 and C206-C230. Catalysis depends on S210, which acts as the Charge relay system.

Belongs to the peptidase S1 family.

The protein resides in the secreted. In terms of biological role, specificity, limited to carboxyl side of arginine residue in B-chain of insulin. In Hypoderma lineatum (Early cattle grub), this protein is Hypodermin-A.